Reading from the N-terminus, the 350-residue chain is D-guloside 3-dehydrogenase (350 aa).

This sequence belongs to the zinc-containing alcohol dehydrogenase family. It depends on Zn(2+) as a cofactor.

The catalysed reaction is a D-guloside + NAD(+) = a 3-dehydro-D-guloside + NADH + H(+). Catalyzes the NAD(+)-dependent oxidation of the hydroxyl group at C3 of D-gulosides leading to 3-dehydro-D-gulosides. Probably functions in a metabolic pathway that transforms D-gulosides to D-glucosides. Is also able to catalyze the reverse reactions, i.e. the NADH-dependent reduction of the oxo group at C3 of 3-dehydro-D-gulosides leading to D-gulosides. In vitro, can oxidize D-gulose and methyl beta-D-guloside, and reduce methyl alpha-3-dehydro-D-guloside and methyl beta-3-dehydro-D-guloside. However, the actual specific physiological substrates for this metabolic pathway are unknown. The chain is D-guloside 3-dehydrogenase (ycjQ) from Escherichia coli (strain K12).